The primary structure comprises 1106 residues: MSSVSSAEPTAQQNFNPSCHFRMRPNAANRGGSISSGNNRSSGFGGGGFDDGGDEISSSAIAAAAAAVLSSPVVSEFSYTRERLLELAPTGSIMPDALRDQLFFNEKNLPLVSNTPLSEHEQKLQHNINSSKAMSLLSHADRASIAAGAAYGSGYGAASGALQNGQSPTSRWAPKSSWNKGTPDRGTGTTPRGGGSVGRASGAFFAGRGGGRIGGENGFGGATNGGSPAAQNEDSPGTYQSKFNALRRGGGAGSVGRGGSTTGSAFNTRADALYNPNDPTDRPKAVNPAATRSESDEEEEEGWSKVGSTSRTSTNAAPQSSERPAWARSESWIQRTQQQQQQQQQQSTQQQAQPPITLWNNREVGSDSTVWKDRNHMVAAVRKASTENHPPQQQQQQQQRSSAPVSAPSRQESESTDVPNLPIPTYPSDPSAWSNNSMGGGIFYQPTPQPPAPIVKEEPVQFYYMDPTETRRGPFPKDQMNVWFKAGYFTDESLRVQRGENGEYKTIGDLKKLHGSSTPFEYLEDIEPPRPILPSIPYPSATNPLYPAAFGGVNMWSSMGQPTDVYMMQTNFEQQLVAERNRLLDDHNRRLAEEAEKMAKFQEAMYRQLTMQHEQRVREQELLLQKRAEEIEKREAESKREEAARLQKLEQEAREIEERKAALEAEDRRKREIEEYNRMCEKKKNEIIAKEAADRMRLEEATERERRRLEAESRVAEEKIRRDRVRAELEAREREEERKRAAERERIARETASLQQQAELDAAWAGKKIATVTTSNSAFTGAPKQVSPSGSEESDEWISTSKEVKHTKTAPWAAKVEAPQKSEKTLLEIQKEEERKFKVEQEKNAKLKAKEQASNITSAAAIAGDKSGGLWGASKTWAAPESNSSKSYVSPFLDGPSLEAANKMALQKKNSQPKIAVPAKSAPTSAKVATPVKAKATAVAVSSPATNQKTKKTKEQVATDELQQWFVKRFQQFSTQVDSSTLFDCIMSLENPNEVEDIVMSYLDESKTVKEFVREFIKRRIAMRAAGGRPDADDLTSARTAAAAPSDSNSGSNSNSGNGQGKKKKKTQKQVLDGNILGFRGTAAADRLNKGEIDAVPSAPVNPSRR.

Residues 1–17 (MSSVSSAEPTAQQNFNP) show a composition bias toward polar residues. Disordered stretches follow at residues 1–50 (MSSV…GGFD), 160–370 (GALQ…DSTV), and 383–434 (KAST…SAWS). Residues 30-42 (RGGSISSGNNRSS) are compositionally biased toward low complexity. A compositionally biased stretch (polar residues) spans 162–180 (LQNGQSPTSRWAPKSSWNK). Residues 207–224 (GRGGGRIGGENGFGGATN) show a composition bias toward gly residues. A compositionally biased stretch (polar residues) spans 229–243 (AAQNEDSPGTYQSKF). A compositionally biased stretch (gly residues) spans 248–261 (RGGGAGSVGRGGST). The segment covering 306–322 (VGSTSRTSTNAAPQSSE) has biased composition (polar residues). 2 stretches are compositionally biased toward low complexity: residues 334–353 (QRTQQQQQQQQQQSTQQQAQ) and 390–410 (PPQQQQQQQQRSSAPVSAPSR). The GYF domain occupies 459-508 (PVQFYYMDPTETRRGPFPKDQMNVWFKAGYFTDESLRVQRGENGEYKTIG). Residues 584–746 (LDDHNRRLAE…ERKRAAERER (163 aa)) adopt a coiled-coil conformation. 4 disordered regions span residues 778–811 (AFTGAPKQVSPSGSEESDEWISTSKEVKHTKTAP), 909–928 (KNSQPKIAVPAKSAPTSAKV), 1026–1076 (AGGR…DGNI), and 1087–1106 (RLNKGEIDAVPSAPVNPSRR). The span at 786–801 (VSPSGSEESDEWISTS) shows a compositional bias: polar residues. The span at 1046–1057 (SDSNSGSNSNSG) shows a compositional bias: low complexity.

This is GYF domain-containing protein gyf-1 from Caenorhabditis elegans.